A 292-amino-acid chain; its full sequence is Protein PHR1-LIKE 3 (292 aa).

An HTH myb-type domain is found at 34 to 94 (TDPKPRLRWT…HLQKFRLGRQ (61 aa)). Positions 65 to 90 (PKTIMRTMGVKGLTLYHLKSHLQKFR) form a DNA-binding region, H-T-H motif. Residues 137–157 (TEALRAQMEVQRRLHEQLEVQ) are a coiled coil. The short motif at 150 to 155 (LHEQLE) is the LHEQLE element.

This sequence belongs to the MYB-CC family. In terms of assembly, homo- and heterodimers. Interacts with PHL2, but not with PHR1.

It localises to the nucleus. Its function is as follows. Transcriptional activator. Probable component of the central regulatory system controlling transcriptional responses to Pi starvation. Binds in a sequence-specific manner to phosphate starvation-regulated promoters. Required for female gametophyte development and function. The chain is Protein PHR1-LIKE 3 from Arabidopsis thaliana (Mouse-ear cress).